The chain runs to 164 residues: MKYVTPDLCDAYPQLVSVVEPMFQNFGAKSSFGGEIVTVKCFEDNSVVKQQVDQPGHGKVMVVDGGGSKRAALLGDMLAEKAAANGWEGIIIYGCIRDVDVIRQTDLGVQALGTHPMKTDKRGIGDLNADITFGGVTFKPGHYVYADNNGVIVSPEPLSMPQEQ.

Substrate contacts are provided by residues 75–78 and R97; that span reads GDML. D98 contacts a divalent metal cation.

The protein belongs to the class II aldolase/RraA-like family. Homotrimer. A divalent metal cation is required as a cofactor.

The catalysed reaction is 4-hydroxy-4-methyl-2-oxoglutarate = 2 pyruvate. It carries out the reaction oxaloacetate + H(+) = pyruvate + CO2. Its function is as follows. Catalyzes the aldol cleavage of 4-hydroxy-4-methyl-2-oxoglutarate (HMG) into 2 molecules of pyruvate. Also contains a secondary oxaloacetate (OAA) decarboxylase activity due to the common pyruvate enolate transition state formed following C-C bond cleavage in the retro-aldol and decarboxylation reactions. This chain is Putative 4-hydroxy-4-methyl-2-oxoglutarate aldolase, found in Hahella chejuensis (strain KCTC 2396).